A 156-amino-acid chain; its full sequence is 6,7-dimethyl-8-ribityllumazine synthase (156 aa).

Residues Phe22, 57–59, and 81–83 contribute to the 5-amino-6-(D-ribitylamino)uracil site; these read AYE and TVI. 86 to 87 lines the (2S)-2-hydroxy-3-oxobutyl phosphate pocket; it reads GT. His89 acts as the Proton donor in catalysis. Phe114 provides a ligand contact to 5-amino-6-(D-ribitylamino)uracil. A (2S)-2-hydroxy-3-oxobutyl phosphate-binding site is contributed by Arg128.

This sequence belongs to the DMRL synthase family. In terms of assembly, forms an icosahedral capsid composed of 60 subunits, arranged as a dodecamer of pentamers.

It carries out the reaction (2S)-2-hydroxy-3-oxobutyl phosphate + 5-amino-6-(D-ribitylamino)uracil = 6,7-dimethyl-8-(1-D-ribityl)lumazine + phosphate + 2 H2O + H(+). It participates in cofactor biosynthesis; riboflavin biosynthesis; riboflavin from 2-hydroxy-3-oxobutyl phosphate and 5-amino-6-(D-ribitylamino)uracil: step 1/2. In terms of biological role, catalyzes the formation of 6,7-dimethyl-8-ribityllumazine by condensation of 5-amino-6-(D-ribitylamino)uracil with 3,4-dihydroxy-2-butanone 4-phosphate. This is the penultimate step in the biosynthesis of riboflavin. The sequence is that of 6,7-dimethyl-8-ribityllumazine synthase from Citrobacter koseri (strain ATCC BAA-895 / CDC 4225-83 / SGSC4696).